The chain runs to 486 residues: Cardiolipin synthase A (486 aa).

The next 2 helical transmembrane spans lie at Ile-3–Ile-23 and Met-38–Phe-58. 2 PLD phosphodiesterase domains span residues Leu-219–Tyr-246 and Lys-399–Ser-426. Catalysis depends on residues His-224, Lys-226, Asp-231, His-404, Lys-406, and Asp-411.

It belongs to the phospholipase D family. Cardiolipin synthase subfamily. ClsA sub-subfamily.

The protein resides in the cell inner membrane. The enzyme catalyses 2 a 1,2-diacyl-sn-glycero-3-phospho-(1'-sn-glycerol) = a cardiolipin + glycerol. In terms of biological role, catalyzes the reversible phosphatidyl group transfer from one phosphatidylglycerol molecule to another to form cardiolipin (CL) (diphosphatidylglycerol) and glycerol. In Buchnera aphidicola subsp. Schizaphis graminum (strain Sg), this protein is Cardiolipin synthase A.